The chain runs to 283 residues: Phosphatidylserine decarboxylase proenzyme (283 aa).

Catalysis depends on charge relay system; for autoendoproteolytic cleavage activity residues D96, H152, and S250. Residue S250 is the Schiff-base intermediate with substrate; via pyruvic acid; for decarboxylase activity of the active site. A Pyruvic acid (Ser); by autocatalysis modification is found at S250.

It belongs to the phosphatidylserine decarboxylase family. PSD-B subfamily. Prokaryotic type I sub-subfamily. In terms of assembly, heterodimer of a large membrane-associated beta subunit and a small pyruvoyl-containing alpha subunit. Pyruvate serves as cofactor. Post-translationally, is synthesized initially as an inactive proenzyme. Formation of the active enzyme involves a self-maturation process in which the active site pyruvoyl group is generated from an internal serine residue via an autocatalytic post-translational modification. Two non-identical subunits are generated from the proenzyme in this reaction, and the pyruvate is formed at the N-terminus of the alpha chain, which is derived from the carboxyl end of the proenzyme. The autoendoproteolytic cleavage occurs by a canonical serine protease mechanism, in which the side chain hydroxyl group of the serine supplies its oxygen atom to form the C-terminus of the beta chain, while the remainder of the serine residue undergoes an oxidative deamination to produce ammonia and the pyruvoyl prosthetic group on the alpha chain. During this reaction, the Ser that is part of the protease active site of the proenzyme becomes the pyruvoyl prosthetic group, which constitutes an essential element of the active site of the mature decarboxylase.

It localises to the cell membrane. It carries out the reaction a 1,2-diacyl-sn-glycero-3-phospho-L-serine + H(+) = a 1,2-diacyl-sn-glycero-3-phosphoethanolamine + CO2. It participates in phospholipid metabolism; phosphatidylethanolamine biosynthesis; phosphatidylethanolamine from CDP-diacylglycerol: step 2/2. In terms of biological role, catalyzes the formation of phosphatidylethanolamine (PtdEtn) from phosphatidylserine (PtdSer). The sequence is that of Phosphatidylserine decarboxylase proenzyme from Acinetobacter baumannii (strain AB0057).